The chain runs to 233 residues: Biosynthetic peptidoglycan transglycosylase (233 aa).

A helical membrane pass occupies residues 8 to 28 (LIALPVGIFIFFNAYVYGNII).

It belongs to the glycosyltransferase 51 family.

The protein resides in the cell inner membrane. The catalysed reaction is [GlcNAc-(1-&gt;4)-Mur2Ac(oyl-L-Ala-gamma-D-Glu-L-Lys-D-Ala-D-Ala)](n)-di-trans,octa-cis-undecaprenyl diphosphate + beta-D-GlcNAc-(1-&gt;4)-Mur2Ac(oyl-L-Ala-gamma-D-Glu-L-Lys-D-Ala-D-Ala)-di-trans,octa-cis-undecaprenyl diphosphate = [GlcNAc-(1-&gt;4)-Mur2Ac(oyl-L-Ala-gamma-D-Glu-L-Lys-D-Ala-D-Ala)](n+1)-di-trans,octa-cis-undecaprenyl diphosphate + di-trans,octa-cis-undecaprenyl diphosphate + H(+). The protein operates within cell wall biogenesis; peptidoglycan biosynthesis. In terms of biological role, peptidoglycan polymerase that catalyzes glycan chain elongation from lipid-linked precursors. This Neisseria gonorrhoeae (strain NCCP11945) protein is Biosynthetic peptidoglycan transglycosylase.